Reading from the N-terminus, the 92-residue chain is Acylphosphatase (92 aa).

Positions 5-92 (CIAAYVYGVV…TPFETFKIRY (88 aa)) constitute an Acylphosphatase-like domain. Catalysis depends on residues Arg-20 and Asn-38.

The protein belongs to the acylphosphatase family.

The enzyme catalyses an acyl phosphate + H2O = a carboxylate + phosphate + H(+). This Yersinia enterocolitica serotype O:8 / biotype 1B (strain NCTC 13174 / 8081) protein is Acylphosphatase (acyP).